The chain runs to 159 residues: Eukaryotic translation initiation factor 5A-1 (159 aa).

A compositionally biased stretch (basic and acidic residues) spans 1-12 (MSDEEHHFESKA). The disordered stretch occupies residues 1-23 (MSDEEHHFESKADAGASKTYPQQ). Hypusine is present on Lys52.

This sequence belongs to the eIF-5A family. Lys-52 undergoes hypusination, a unique post-translational modification that consists in the addition of a butylamino group from spermidine to lysine side chain, leading to the formation of the unusual amino acid hypusine. eIF-5As are the only known proteins to undergo this modification, which is essential for their function.

In terms of biological role, translation factor that promotes translation elongation and termination, particularly upon ribosome stalling at specific amino acid sequence contexts. Binds between the exit (E) and peptidyl (P) site of the ribosome and promotes rescue of stalled ribosome: specifically required for efficient translation of polyproline-containing peptides as well as other motifs that stall the ribosome. Acts as a ribosome quality control (RQC) cofactor by joining the RQC complex to facilitate peptidyl transfer during CAT tailing step. In Nicotiana plumbaginifolia (Leadwort-leaved tobacco), this protein is Eukaryotic translation initiation factor 5A-1 (EIF-5A1).